The primary structure comprises 377 residues: Nitric oxide reductase FlRd-NAD(+) reductase (377 aa).

The protein belongs to the FAD-dependent oxidoreductase family. FAD is required as a cofactor.

The protein localises to the cytoplasm. It carries out the reaction 2 reduced [nitric oxide reductase rubredoxin domain] + NAD(+) + H(+) = 2 oxidized [nitric oxide reductase rubredoxin domain] + NADH. Its pathway is nitrogen metabolism; nitric oxide reduction. In terms of biological role, one of at least two accessory proteins for anaerobic nitric oxide (NO) reductase. Reduces the rubredoxin moiety of NO reductase. The polypeptide is Nitric oxide reductase FlRd-NAD(+) reductase (Klebsiella pneumoniae subsp. pneumoniae (strain ATCC 700721 / MGH 78578)).